The sequence spans 498 residues: ATP synthase subunit beta, chloroplastic (498 aa).

Residue 172-179 (GGAGVGKT) participates in ATP binding.

Belongs to the ATPase alpha/beta chains family. In terms of assembly, F-type ATPases have 2 components, CF(1) - the catalytic core - and CF(0) - the membrane proton channel. CF(1) has five subunits: alpha(3), beta(3), gamma(1), delta(1), epsilon(1). CF(0) has four main subunits: a(1), b(1), b'(1) and c(9-12).

The protein localises to the plastid. The protein resides in the chloroplast thylakoid membrane. The enzyme catalyses ATP + H2O + 4 H(+)(in) = ADP + phosphate + 5 H(+)(out). Produces ATP from ADP in the presence of a proton gradient across the membrane. The catalytic sites are hosted primarily by the beta subunits. The polypeptide is ATP synthase subunit beta, chloroplastic (Calycanthus floridus var. glaucus (Eastern sweetshrub)).